We begin with the raw amino-acid sequence, 406 residues long: Tyrosine--tRNA ligase (406 aa).

Y35 contributes to the L-tyrosine binding site. Residues 40–49 (PTADSLHVGH) carry the 'HIGH' region motif. L-tyrosine-binding residues include Y168 and Q172. Residues 228–232 (KMGKT) carry the 'KMSKS' region motif. K231 serves as a coordination point for ATP. The S4 RNA-binding domain maps to 340-404 (SELLDILVEA…RGKKNYNKIV (65 aa)).

It belongs to the class-I aminoacyl-tRNA synthetase family. TyrS type 1 subfamily. Homodimer.

The protein resides in the cytoplasm. It catalyses the reaction tRNA(Tyr) + L-tyrosine + ATP = L-tyrosyl-tRNA(Tyr) + AMP + diphosphate + H(+). Its function is as follows. Catalyzes the attachment of tyrosine to tRNA(Tyr) in a two-step reaction: tyrosine is first activated by ATP to form Tyr-AMP and then transferred to the acceptor end of tRNA(Tyr). The polypeptide is Tyrosine--tRNA ligase (Clostridium perfringens (strain ATCC 13124 / DSM 756 / JCM 1290 / NCIMB 6125 / NCTC 8237 / Type A)).